We begin with the raw amino-acid sequence, 908 residues long: Low affinity vacuolar monovalent cation/H(+) antiporter (908 aa).

Over residues 1–15 (MAKNNHISASGNSTS) the composition is skewed to polar residues. A disordered region spans residues 1–20 (MAKNNHISASGNSTSGDHRL). Residues 1–244 (MAKNNHISAS…WEVTCSNVLW (244 aa)) lie on the Cytoplasmic side of the membrane. At Thr-26 the chain carries Phosphothreonine. Residue Ser-32 is modified to Phosphoserine. The residue at position 33 (Thr-33) is a Phosphothreonine. The segment at 68–147 (NKSKRSVSSQ…DDEDANDDSR (80 aa)) is disordered. Residues 73-87 (SVSSQSPIVHSSNNT) show a composition bias toward low complexity. A compositionally biased stretch (polar residues) spans 102-121 (ESLSSKSHSVPDLNTATPSS). Residue Ser-110 is modified to Phosphoserine. Residue Thr-118 is modified to Phosphothreonine. Ser-121 is subject to Phosphoserine. Residues 245–265 (FILFGFPIAILFYSAAIVVFL) traverse the membrane as a helical segment. The Vacuolar portion of the chain corresponds to 266–408 (LGGGGLVTNS…GRVLFYTIFH (143 aa)). An N-linked (GlcNAc...) asparagine glycan is attached at Asn-361. A helical transmembrane segment spans residues 409-429 (LVLQPILAVLSLCLWLLVFTI). Topologically, residues 430 to 494 (PMSNVLWQIM…HYYKYTVDGT (65 aa)) are cytoplasmic. The chain crosses the membrane as a helical span at residues 495–515 (NVIVVNLISIVFFTIFDFYVL). Residues 516–530 (KNFLHWKTWFTYESS) are Vacuolar-facing. A helical transmembrane segment spans residues 531–551 (IFILCLTSTIPLAFYIGQAVA). The Cytoplasmic portion of the chain corresponds to 552–560 (SISAQTSMG). A helical membrane pass occupies residues 561–581 (VGAVINAFFSTIVEIFLYCVA). Over 582-587 (LQQKKG) the chain is Vacuolar. A helical transmembrane segment spans residues 588 to 608 (LLVEGSMIGSILGAVLLLPGL). The Cytoplasmic portion of the chain corresponds to 609-626 (SMCGGALNRKTQRYNPAS). The chain crosses the membrane as a helical span at residues 627-647 (AGVSSALLIFSMIVMFVPTVL). The Vacuolar segment spans residues 648–686 (YEIYGGYSVNCADGANDRDCTFSHPPLKFNRLFTHVIQP). The helical transmembrane segment at 687–707 (MSISCAIVLFCAYIIGLWFTL) threads the bilayer. Over 708–746 (RTHAKMIWQLPIADPTSTAPEQQEQNSHDAPNWSRSKST) the chain is Cytoplasmic. The chain crosses the membrane as a helical span at residues 747 to 767 (CILLMSTLLYAIIAEILVSCV). Topologically, residues 768-783 (DAVLEDIPSLNPKFLG) are vacuolar. A helical transmembrane segment spans residues 784-804 (LTIFALIPNTTEFLNAISFAI). Residues 805-816 (HGNVALSMEIGS) lie on the Cytoplasmic side of the membrane. Residues 817-837 (AYALQVCLLQIPSLVIYSIFY) form a helical membrane-spanning segment. Over 838–851 (TWNVKKSMINIRTQ) the chain is Vacuolar. Residues 852–872 (MFPLVFPRWDIFGAMTSVFMF) traverse the membrane as a helical segment. Residues 873–885 (TYLYAEGKSNYFK) lie on the Cytoplasmic side of the membrane. A helical membrane pass occupies residues 886–906 (GSMLILLYIIIVVGFYFQGAL). Topologically, residues 907–908 (SE) are vacuolar.

Belongs to the Ca(2+):cation antiporter (CaCA) (TC 2.A.19) family.

The protein localises to the vacuole membrane. Its function is as follows. Has a role in promoting intracellular monovalent cation sequestration via the exchange of monovalent cations and especially Na(+) for hydrogen ions across the vacuolar membrane. The protein is Low affinity vacuolar monovalent cation/H(+) antiporter (VNX1) of Saccharomyces cerevisiae (strain ATCC 204508 / S288c) (Baker's yeast).